Consider the following 1721-residue polypeptide: Latent-transforming growth factor beta-binding protein 1 (1721 aa).

Positions 1-23 (MAGAWLRWGLLLWAGLLASSAHG) are cleaved as a signal peptide. Low complexity predominate over residues 64 to 81 (RSSAAAGAPSRASPGVPS). Positions 64–158 (RSSAAAGAPS…SGGGSRLQVH (95 aa)) are disordered. Positions 99 to 111 (RPPPPPPPEPARP) are enriched in pro residues. The span at 112–130 (AVPGGQLHPNPGGHPAAAP) shows a compositional bias: low complexity. Residues 187-219 (TKPSCVPPCQNGGMCLRPQLCVCKPGTKGKACE) form the EGF-like 1 domain. 3 cysteine pairs are disulfide-bonded: Cys191-Cys201, Cys195-Cys207, and Cys209-Cys218. Residues 228–259 (SPVFGGQSPGAASSWGPPEQAAKHTSSKKADT) form a disordered region. Asn347 and Asn378 each carry an N-linked (GlcNAc...) asparagine glycan. Residues 399–431 (RVVICHLPCMNGGQCSSRDKCQCPPNFTGKLCQ) form the EGF-like 2 domain. 6 cysteine pairs are disulfide-bonded: Cys403–Cys413, Cys407–Cys419, Cys421–Cys430, Cys559–Cys581, Cys568–Cys594, and Cys582–Cys597. The N-linked (GlcNAc...) asparagine glycan is linked to Asn424. The region spanning 557 to 609 (GRCFQETIGSQCGKALPGLSKQEDCCGTVGTSWGFNKCQKCPKKPSYHGYNQM) is the TB 1 domain. Asn620 is a glycosylation site (N-linked (GlcNAc...) asparagine). Residues 626 to 663 (DINECQLQGVCPNGECLNTMGSYRCTCKIGFGPDPTFS) form the EGF-like 3; calcium-binding domain. 7 cysteine pairs are disulfide-bonded: Cys630-Cys641, Cys636-Cys650, Cys652-Cys665, Cys679-Cys702, Cys689-Cys714, Cys703-Cys717, and Cys704-Cys729. Ser647 carries an O-linked (Glc) serine glycan. One can recognise a TB 2 domain in the interval 677–729 (GPCYRLVSSGRQCMHPLSVHLTKQLCCCSVGKAWGPHCEKCPLPGTAAFKEIC). Positions 750–811 (VGKGPVFVKP…APPEKEIPSL (62 aa)) are disordered. Thr769 and Thr801 each carry an O-linked (GalNAc...) threonine glycan. Positions 873-910 (EINECTVNPDICGAGHCINLPVRYTCICYEGYRFSEQQ) constitute an EGF-like 4; calcium-binding domain. 29 cysteine pairs are disulfide-bonded: Cys877–Cys889, Cys884–Cys898, Cys900–Cys913, Cys919–Cys931, Cys926–Cys940, Cys942–Cys955, Cys961–Cys972, Cys967–Cys981, Cys984–Cys996, Cys1002–Cys1013, Cys1008–Cys1022, Cys1025–Cys1036, Cys1042–Cys1053, Cys1048–Cys1062, Cys1064–Cys1077, Cys1083–Cys1094, Cys1089–Cys1103, Cys1105–Cys1118, Cys1124–Cys1135, Cys1130–Cys1144, Cys1146–Cys1159, Cys1165–Cys1177, Cys1172–Cys1186, Cys1188–Cys1200, Cys1206–Cys1218, Cys1212–Cys1227, Cys1229–Cys1242, Cys1248–Cys1260, and Cys1254–Cys1269. The EGF-like 5; calcium-binding domain maps to 915-956 (DIDECTQVQHLCSQGRCENTEGSFLCICPAGFMASEEGTNCI). Ser937 is a glycosylation site (O-linked (Glc) serine). One can recognise an EGF-like 6; calcium-binding domain in the interval 957-997 (DVDECLRPDVCGEGHCVNTVGAFRCEYCDSGYRMTQRGRCE). Asn974 is subject to (3R)-3-hydroxyasparagine. The EGF-like 7; calcium-binding domain maps to 998–1037 (DIDECLNPSTCPDEQCVNSPGSYQCVPCTEGFRGWNGQCL). O-linked (Glc) serine glycosylation occurs at Ser1019. The region spanning 1038–1078 (DVDECLEPNVCANGDCSNLEGSYMCSCHKGYTRTPDHKHCR) is the EGF-like 8; calcium-binding domain. Ser1059 is a glycosylation site (O-linked (Glc) serine). The EGF-like 9; calcium-binding domain maps to 1079-1119 (DIDECQQGNLCVNGQCKNTEGSFRCTCGQGYQLSAAKDQCE). Residues 1120–1160 (DIDECQHRHLCAHGQCRNTEGSFQCVCDQGYRASGLGDHCE) form the EGF-like 10; calcium-binding domain. Asn1137 is modified ((3R)-3-hydroxyasparagine). Ser1141 carries an O-linked (Glc) serine glycan. The 41-residue stretch at 1161 to 1201 (DINECLEDKSVCQRGDCINTAGSYDCTCPDGFQLDDNKTCQ) folds into the EGF-like 11; calcium-binding domain. The Cell attachment site motif lies at 1174–1176 (RGD). N-linked (GlcNAc...) asparagine glycosylation occurs at Asn1197. The EGF-like 12; calcium-binding domain occupies 1202–1243 (DINECEHPGLCGPQGECLNTEGSFHCVCQQGFSISADGRTCE). Ser1224 carries an O-linked (Glc) serine glycan. One can recognise an EGF-like 13; calcium-binding domain in the interval 1244 to 1281 (DIDECVNNTVCDSHGFCDNTAGSFRCLCYQGFQAPQDG). Asn1250 is a glycosylation site (N-linked (GlcNAc...) asparagine). The 43-residue stretch at 1286-1328 (DVNECELLSGVCGEAFCENVEGSFLCVCADENQEYSPMTGQCR) folds into the EGF-like 14; calcium-binding domain. The segment at 1344–1411 (EEKKECYYNL…PKGKGFVPAG (68 aa)) is 8-Cys3 region. The TB 3 domain maps to 1347–1401 (KECYYNLNDASLCDNVLAPNVTKQECCCTSGVGWGDNCEIFPCPVLGTAEFTEMC). Intrachain disulfides connect Cys1349–Cys1372, Cys1359–Cys1384, Cys1373–Cys1389, and Cys1374–Cys1401. Residue Asn1366 is glycosylated (N-linked (GlcNAc...) asparagine). The residue at position 1414 (Ser1414) is a Phosphoserine; by FAM20C. In terms of domain architecture, EGF-like 15; calcium-binding spans 1424–1466 (DADECLLFGQEICKNGFCLNTRPGYECYCKQGTYYDPVKLQCF). The 37-residue stretch at 1467-1503 (DMDECQDPSSCIDGQCVNTEGSYNCFCTHPMVLDASE) folds into the EGF-like 16; calcium-binding domain. 6 disulfides stabilise this stretch: Cys1471–Cys1482, Cys1477–Cys1491, Cys1526–Cys1550, Cys1536–Cys1562, Cys1551–Cys1565, and Cys1552–Cys1577. Ser1488 carries an O-linked (Glc) serine glycan. The segment at 1507–1721 (IRPAESNEQI…LNLEKDSDLE (215 aa)) is C-terminal domain. Positions 1524 to 1577 (DLCWEHLSDEYVCSRPLVGKQTTYTECCCLYGEAWGMQCALCPLKDSDDYAQLC) constitute a TB 4 domain. Phosphoserine occurs at positions 1597 and 1616. The 37-residue stretch at 1621 to 1657 (QAEECGILNGCENGRCVRVQEGYTCDCFDGYHLDTAK) folds into the EGF-like 17 domain. 5 cysteine pairs are disulfide-bonded: Cys1625/Cys1636, Cys1631/Cys1645, Cys1666/Cys1681, Cys1676/Cys1690, and Cys1692/Cys1705. An EGF-like 18; calcium-binding domain is found at 1662-1706 (DVNECDELNNRMSLCKNAKCINTDGSYKCLCLPGYVPSDKPNYCT). O-linked (Glc) serine glycosylation is present at Ser1687.

This sequence belongs to the LTBP family. Interacts with TGFB1; associates via disulfide bonds with the Latency-associated peptide chain (LAP) regulatory chain of TGFB1, leading to regulate activation of TGF-beta-1. LTBP1 does not bind directly to TGF-beta-1, the active chain of TGFB1. Interacts (via C-terminal domain) with FBN1 (via N-terminal domain). Interacts with FBN2. Interacts with ADAMTSL2. Interacts with EFEMP2. Post-translationally, contains hydroxylated asparagine residues. Isoform Short N-terminus is blocked. In terms of processing, two intrachain disulfide bonds from the TB3 domain are rearranged upon TGFB1 binding, and form interchain bonds with TGFB1 propeptide, anchoring it to the extracellular matrix. Post-translationally, O-glycosylated on serine residues by POGLUT2 and POGLUT3. In terms of tissue distribution, expressed in the aorta (at protein level). Isoform Long: Expressed in fibroblasts.

It localises to the secreted. The protein localises to the extracellular space. It is found in the extracellular matrix. Its function is as follows. Key regulator of transforming growth factor beta (TGFB1, TGFB2 and TGFB3) that controls TGF-beta activation by maintaining it in a latent state during storage in extracellular space. Associates specifically via disulfide bonds with the Latency-associated peptide (LAP), which is the regulatory chain of TGF-beta, and regulates integrin-dependent activation of TGF-beta. Outcompeted by LRRC32/GARP for binding to LAP regulatory chain of TGF-beta. In Homo sapiens (Human), this protein is Latent-transforming growth factor beta-binding protein 1.